The primary structure comprises 254 residues: Probable transcriptional regulator ycf27 (254 aa).

The region spanning 16-129 is the Response regulatory domain; sequence KVLIVDDEAS…ELEARIRAVL (114 aa). D65 is subject to 4-aspartylphosphate. Positions 85 to 103 form a DNA-binding region, H-T-H motif; it reads DVPIIMLTALGDVADRITG. A DNA-binding region (ompR/PhoB-type) is located at residues 144–245; the sequence is SGIINFNFLT…ARGTGYLFQR (102 aa).

The protein resides in the plastid. The protein localises to the chloroplast. Functionally, probable promoter-specific protein mediating the interaction between DNA and RNA polymerase. The chain is Probable transcriptional regulator ycf27 (ycf27) from Guillardia theta (Cryptophyte).